Consider the following 133-residue polypeptide: ATP synthase epsilon chain (133 aa).

It belongs to the ATPase epsilon chain family. F-type ATPases have 2 components, CF(1) - the catalytic core - and CF(0) - the membrane proton channel. CF(1) has five subunits: alpha(3), beta(3), gamma(1), delta(1), epsilon(1). CF(0) has three main subunits: a, b and c.

It is found in the cell membrane. Its function is as follows. Produces ATP from ADP in the presence of a proton gradient across the membrane. The sequence is that of ATP synthase epsilon chain from Clostridium perfringens (strain ATCC 13124 / DSM 756 / JCM 1290 / NCIMB 6125 / NCTC 8237 / Type A).